A 122-amino-acid chain; its full sequence is Large ribosomal subunit protein uL14 (122 aa).

It belongs to the universal ribosomal protein uL14 family. In terms of assembly, part of the 50S ribosomal subunit. Forms a cluster with proteins L3 and L19. In the 70S ribosome, L14 and L19 interact and together make contacts with the 16S rRNA in bridges B5 and B8.

Binds to 23S rRNA. Forms part of two intersubunit bridges in the 70S ribosome. This Methylobacterium sp. (strain 4-46) protein is Large ribosomal subunit protein uL14.